The sequence spans 765 residues: 5-methyltetrahydropteroyltriglutamate--homocysteine methyltransferase (765 aa).

5-methyltetrahydropteroyltri-L-glutamate contacts are provided by residues 18–21 and Lys114; that span reads REWK. Residues 437–439 and Glu490 contribute to the L-homocysteine site; that span reads IGS. Residues 437-439 and Glu490 contribute to the L-methionine site; that span reads IGS. Residue Trp567 coordinates 5-methyltetrahydropteroyltri-L-glutamate. Asp605 is an L-homocysteine binding site. Residue Asp605 coordinates L-methionine. Glu611 lines the 5-methyltetrahydropteroyltri-L-glutamate pocket. Positions 647, 649, and 671 each coordinate Zn(2+). His700 functions as the Proton donor in the catalytic mechanism. Residue Cys732 participates in Zn(2+) binding.

The protein belongs to the vitamin-B12 independent methionine synthase family. It depends on Zn(2+) as a cofactor.

The enzyme catalyses 5-methyltetrahydropteroyltri-L-glutamate + L-homocysteine = tetrahydropteroyltri-L-glutamate + L-methionine. It functions in the pathway amino-acid biosynthesis; L-methionine biosynthesis via de novo pathway; L-methionine from L-homocysteine (MetE route): step 1/1. Catalyzes the transfer of a methyl group from 5-methyltetrahydrofolate to homocysteine resulting in methionine formation. The chain is 5-methyltetrahydropteroyltriglutamate--homocysteine methyltransferase from Listeria welshimeri serovar 6b (strain ATCC 35897 / DSM 20650 / CCUG 15529 / CIP 8149 / NCTC 11857 / SLCC 5334 / V8).